The sequence spans 269 residues: Tryptophan synthase alpha chain (269 aa).

Catalysis depends on proton acceptor residues glutamate 49 and aspartate 60.

Belongs to the TrpA family. In terms of assembly, tetramer of two alpha and two beta chains.

The catalysed reaction is (1S,2R)-1-C-(indol-3-yl)glycerol 3-phosphate + L-serine = D-glyceraldehyde 3-phosphate + L-tryptophan + H2O. It participates in amino-acid biosynthesis; L-tryptophan biosynthesis; L-tryptophan from chorismate: step 5/5. The alpha subunit is responsible for the aldol cleavage of indoleglycerol phosphate to indole and glyceraldehyde 3-phosphate. The polypeptide is Tryptophan synthase alpha chain (Buchnera aphidicola subsp. Schlechtendalia chinensis).